Reading from the N-terminus, the 317-residue chain is Methionyl-tRNA formyltransferase (317 aa).

110–113 serves as a coordination point for (6S)-5,6,7,8-tetrahydrofolate; that stretch reads SLLP.

It belongs to the Fmt family.

It carries out the reaction L-methionyl-tRNA(fMet) + (6R)-10-formyltetrahydrofolate = N-formyl-L-methionyl-tRNA(fMet) + (6S)-5,6,7,8-tetrahydrofolate + H(+). Its function is as follows. Attaches a formyl group to the free amino group of methionyl-tRNA(fMet). The formyl group appears to play a dual role in the initiator identity of N-formylmethionyl-tRNA by promoting its recognition by IF2 and preventing the misappropriation of this tRNA by the elongation apparatus. This chain is Methionyl-tRNA formyltransferase, found in Bacillus pumilus (strain SAFR-032).